Here is a 144-residue protein sequence, read N- to C-terminus: Large ribosomal subunit protein uL16 (144 aa).

Belongs to the universal ribosomal protein uL16 family. In terms of assembly, part of the 50S ribosomal subunit.

In terms of biological role, binds 23S rRNA and is also seen to make contacts with the A and possibly P site tRNAs. This is Large ribosomal subunit protein uL16 from Bacillus mycoides (strain KBAB4) (Bacillus weihenstephanensis).